Consider the following 292-residue polypeptide: NAD(P)H-hydrate epimerase (292 aa).

Residues M1–T52 constitute a mitochondrion transit peptide. One can recognise a YjeF N-terminal domain in the interval A68–L279. N122–D126 provides a ligand contact to (6S)-NADPHX. N123 and D189 together coordinate K(+). Residues G193–A199 and D222 contribute to the (6S)-NADPHX site. S225 contributes to the K(+) binding site.

Belongs to the NnrE/AIBP family. K(+) serves as cofactor.

It localises to the mitochondrion. Its subcellular location is the secreted. It carries out the reaction (6R)-NADHX = (6S)-NADHX. The enzyme catalyses (6R)-NADPHX = (6S)-NADPHX. Catalyzes the epimerization of the S- and R-forms of NAD(P)HX, a damaged form of NAD(P)H that is a result of enzymatic or heat-dependent hydration. This is a prerequisite for the S-specific NAD(P)H-hydrate dehydratase to allow the repair of both epimers of NAD(P)HX. This chain is NAD(P)H-hydrate epimerase, found in Xenopus tropicalis (Western clawed frog).